The chain runs to 356 residues: MSL complex subunit 3B (356 aa).

Positions 2-350 (EERTVTLEIP…SEVHYSTRNP (349 aa)) constitute an MRG domain. Disordered regions lie at residues 135–210 (TNRS…WQQD) and 225–247 (KTPV…SPVF). The span at 142 to 156 (LSPSLRLLNPSRPQS) shows a compositional bias: low complexity. Polar residues-rich tracts occupy residues 178–189 (AVQSLRRSSPHT) and 229–243 (HSRS…SQEG).

The protein localises to the nucleus. In terms of biological role, probable non-catalytic component of the MSL histone acetyltransferase complex, a multiprotein complex that mediates the majority of histone H4 acetylation at 'Lys-16' (H4K16ac), an epigenetic mark that prevents chromatin compaction. The chain is MSL complex subunit 3B from Homo sapiens (Human).